The chain runs to 1038 residues: Importin-7 (1038 aa).

At Met-1 the chain carries N-acetylmethionine. The Importin N-terminal domain maps to 22–101; it reads AERQLNEAHK…RENIVEAIIH (80 aa). Residues 881-910 are disordered; sequence EHENDSDDDDEAEDDDETEELGSDEDDIDE. A compositionally biased stretch (acidic residues) spans 884-910; it reads NDSDDDDEAEDDDETEELGSDEDDIDE. Phosphoserine is present on Ser-886. Thr-898 is modified (phosphothreonine). 2 positions are modified to phosphoserine: Ser-903 and Ser-1020.

The protein belongs to the importin beta family. In terms of assembly, forms a heterodimer with KPNB1. Interacts with histone H1. Interacts with H2A, H2B, H3 and H4 histones. Interacts with SNUPN and XPO1. Interacts with RPS7 and RPL5. Interacts with RPL23A (via BIB domain). Binds directly to nuclear pore complexes. Interacts with SMAD4 and NUP93; translocates SMAD4 to the nucleus through the NPC upon BMP7 stimulation resulting in activation of SMAD4 signaling. Interacts with phosphorylated SMAD2; the interaction facilitates translocation of SMAD2 to the nucleus. Interacts with SRP19. Interacts with RUNX2; the interaction inhibits RUNX2 nuclear translocation in osteoblasts. Interacts with HDAC6, DLX3 and KLF4; the interaction facilitates HDAC6, DLX3 and KLF4 nuclear translocation in dental papilla cells. As to quaternary structure, (Microbial infection) Interacts with HIV-1 reverse transcription complex integrase and rev.

It is found in the cytoplasm. The protein localises to the nucleus. In terms of biological role, functions in nuclear protein import, either by acting as autonomous nuclear transport receptor or as an adapter-like protein in association with the importin-beta subunit KPNB1. Acting autonomously, is thought to serve itself as receptor for nuclear localization signals (NLS) and to promote translocation of import substrates through the nuclear pore complex (NPC) by an energy requiring, Ran-dependent mechanism. At the nucleoplasmic side of the NPC, Ran binds to importin, the importin/substrate complex dissociates and importin is re-exported from the nucleus to the cytoplasm where GTP hydrolysis releases Ran. The directionality of nuclear import is thought to be conferred by an asymmetric distribution of the GTP- and GDP-bound forms of Ran between the cytoplasm and nucleus. Mediates autonomously the nuclear import of ribosomal proteins RPL23A, RPS7 and RPL5. In association with KPNB1 mediates the nuclear import of H1 histone and the Ran-binding site of IPO7 is not required but synergizes with that of KPNB1 in importin/substrate complex dissociation. Promotes odontoblast differentiation via promoting nuclear translocation of DLX3, KLF4, SMAD2, thereby facilitating the transcription of target genes that play a role in odontoblast differentiation. Facilitates BMP4-induced translocation of SMAD1 to the nucleus and recruitment to the MSX1 gene promoter, thereby promotes the expression of the odontogenic regulator MSX1 in dental mesenchymal cells. Also promotes odontoblast differentiation by facilitating the nuclear translocation of HDAC6 and subsequent repression of RUNX2 expression. Inhibits osteoblast differentiation by inhibiting nuclear translocation of RUNX2 and therefore inhibition of RUNX2 target gene transcription. In vitro, mediates nuclear import of H2A, H2B, H3 and H4 histones. Functionally, (Microbial infection) Mediates the nuclear import of HIV-1 reverse transcription complex (RTC) integrase. Binds and mediates the nuclear import of HIV-1 Rev. This Homo sapiens (Human) protein is Importin-7 (IPO7).